The following is a 420-amino-acid chain: Tyrosine--tRNA ligase (420 aa).

Tyrosine 36 is an L-tyrosine binding site. Positions 41–50 (PTADSLHIGH) match the 'HIGH' region motif. Residues tyrosine 170 and glutamine 174 each contribute to the L-tyrosine site. The 'KMSKS' region motif lies at 231–235 (KFGKS). Lysine 234 is an ATP binding site. The 68-residue stretch at 353–420 (TNIVEVLIET…KKKYFMVNYQ (68 aa)) folds into the S4 RNA-binding domain.

It belongs to the class-I aminoacyl-tRNA synthetase family. TyrS type 1 subfamily. Homodimer.

It localises to the cytoplasm. It catalyses the reaction tRNA(Tyr) + L-tyrosine + ATP = L-tyrosyl-tRNA(Tyr) + AMP + diphosphate + H(+). Its function is as follows. Catalyzes the attachment of tyrosine to tRNA(Tyr) in a two-step reaction: tyrosine is first activated by ATP to form Tyr-AMP and then transferred to the acceptor end of tRNA(Tyr). The chain is Tyrosine--tRNA ligase from Staphylococcus aureus (strain bovine RF122 / ET3-1).